The primary structure comprises 309 residues: HPr kinase/phosphorylase (309 aa).

Active-site residues include His138 and Lys159. Residue 153–160 (GQSGVGKS) coordinates ATP. A Mg(2+)-binding site is contributed by Ser160. Residue Asp177 is the Proton acceptor; for phosphorylation activity. Proton donor; for dephosphorylation activity of the active site. The tract at residues 201–210 (LEIRGLGIIN) is important for the catalytic mechanism of both phosphorylation and dephosphorylation. Residue Glu202 participates in Mg(2+) binding. Arg243 is an active-site residue. Residues 264–269 (PVRPGR) are important for the catalytic mechanism of dephosphorylation.

It belongs to the HPrK/P family. Homohexamer. Mg(2+) is required as a cofactor.

The enzyme catalyses [HPr protein]-L-serine + ATP = [HPr protein]-O-phospho-L-serine + ADP + H(+). The catalysed reaction is [HPr protein]-O-phospho-L-serine + phosphate + H(+) = [HPr protein]-L-serine + diphosphate. Catalyzes the ATP- as well as the pyrophosphate-dependent phosphorylation of a specific serine residue in HPr, a phosphocarrier protein of the phosphoenolpyruvate-dependent sugar phosphotransferase system (PTS). HprK/P also catalyzes the pyrophosphate-producing, inorganic phosphate-dependent dephosphorylation (phosphorolysis) of seryl-phosphorylated HPr (P-Ser-HPr). The two antagonistic activities of HprK/P are regulated by several intracellular metabolites, which change their concentration in response to the absence or presence of rapidly metabolisable carbon sources (glucose, fructose, etc.) in the growth medium. Also phosphorylates/dephosphorylates the HPr-like catabolite repression protein crh on a specific serine residue. Therefore, by controlling the phosphorylation state of HPr and crh, HPrK/P is a sensor enzyme that plays a major role in the regulation of carbon metabolism and sugar transport: it mediates carbon catabolite repression (CCR), and regulates PTS-catalyzed carbohydrate uptake and inducer exclusion. The protein is HPr kinase/phosphorylase of Bacillus cytotoxicus (strain DSM 22905 / CIP 110041 / 391-98 / NVH 391-98).